Reading from the N-terminus, the 201-residue chain is Holliday junction branch migration complex subunit RuvA (201 aa).

The interval 1-64 (MIGRLRGTLA…EDAQLLYGFA (64 aa)) is domain I. The interval 65 to 143 (EKRERELFRE…AWESMPAIAT (79 aa)) is domain II. A flexible linker region spans residues 144 to 152 (LVVEPGSKT). Positions 153–201 (AVTSAENDAVSALISLGFKPQEASRAVSAIQEENLSSEEMIRRALKGMV) are domain III.

The protein belongs to the RuvA family. Homotetramer. Forms an RuvA(8)-RuvB(12)-Holliday junction (HJ) complex. HJ DNA is sandwiched between 2 RuvA tetramers; dsDNA enters through RuvA and exits via RuvB. An RuvB hexamer assembles on each DNA strand where it exits the tetramer. Each RuvB hexamer is contacted by two RuvA subunits (via domain III) on 2 adjacent RuvB subunits; this complex drives branch migration. In the full resolvosome a probable DNA-RuvA(4)-RuvB(12)-RuvC(2) complex forms which resolves the HJ.

The protein localises to the cytoplasm. Its function is as follows. The RuvA-RuvB-RuvC complex processes Holliday junction (HJ) DNA during genetic recombination and DNA repair, while the RuvA-RuvB complex plays an important role in the rescue of blocked DNA replication forks via replication fork reversal (RFR). RuvA specifically binds to HJ cruciform DNA, conferring on it an open structure. The RuvB hexamer acts as an ATP-dependent pump, pulling dsDNA into and through the RuvAB complex. HJ branch migration allows RuvC to scan DNA until it finds its consensus sequence, where it cleaves and resolves the cruciform DNA. This chain is Holliday junction branch migration complex subunit RuvA, found in Stutzerimonas stutzeri (strain A1501) (Pseudomonas stutzeri).